Reading from the N-terminus, the 431-residue chain is Enolase (431 aa).

Q167 contributes to the (2R)-2-phosphoglycerate binding site. Residue E209 is the Proton donor of the active site. Residues D246, E290, and D316 each contribute to the Mg(2+) site. (2R)-2-phosphoglycerate-binding residues include K341, R370, S371, and K392. Residue K341 is the Proton acceptor of the active site.

The protein belongs to the enolase family. Component of the RNA degradosome, a multiprotein complex involved in RNA processing and mRNA degradation. Requires Mg(2+) as cofactor.

The protein localises to the cytoplasm. Its subcellular location is the secreted. It localises to the cell surface. The catalysed reaction is (2R)-2-phosphoglycerate = phosphoenolpyruvate + H2O. It functions in the pathway carbohydrate degradation; glycolysis; pyruvate from D-glyceraldehyde 3-phosphate: step 4/5. Its function is as follows. Catalyzes the reversible conversion of 2-phosphoglycerate (2-PG) into phosphoenolpyruvate (PEP). It is essential for the degradation of carbohydrates via glycolysis. The protein is Enolase of Shigella flexneri serotype 5b (strain 8401).